Here is a 125-residue protein sequence, read N- to C-terminus: Large ribosomal subunit protein bL20 (125 aa).

This sequence belongs to the bacterial ribosomal protein bL20 family.

Binds directly to 23S ribosomal RNA and is necessary for the in vitro assembly process of the 50S ribosomal subunit. It is not involved in the protein synthesizing functions of that subunit. In Methylobacterium nodulans (strain LMG 21967 / CNCM I-2342 / ORS 2060), this protein is Large ribosomal subunit protein bL20.